A 245-amino-acid polypeptide reads, in one-letter code: Ribonuclease PH (245 aa).

Phosphate contacts are provided by residues Arg-86 and 124–126 (GTR).

It belongs to the RNase PH family. As to quaternary structure, homohexameric ring arranged as a trimer of dimers.

The enzyme catalyses tRNA(n+1) + phosphate = tRNA(n) + a ribonucleoside 5'-diphosphate. Its function is as follows. Phosphorolytic 3'-5' exoribonuclease that plays an important role in tRNA 3'-end maturation. Removes nucleotide residues following the 3'-CCA terminus of tRNAs; can also add nucleotides to the ends of RNA molecules by using nucleoside diphosphates as substrates, but this may not be physiologically important. Probably plays a role in initiation of 16S rRNA degradation (leading to ribosome degradation) during starvation. The chain is Ribonuclease PH from Bacillus velezensis (strain DSM 23117 / BGSC 10A6 / LMG 26770 / FZB42) (Bacillus amyloliquefaciens subsp. plantarum).